A 396-amino-acid polypeptide reads, in one-letter code: Probable glucan endo-1,6-beta-glucosidase B (396 aa).

The N-terminal stretch at 1 to 17 (MIRRLAAFSALSGLATA) is a signal peptide. N-linked (GlcNAc...) asparagine glycosylation is present at asparagine 30. The active-site Proton donor is the glutamate 219. Asparagine 272 carries an N-linked (GlcNAc...) asparagine glycan. Glutamate 320 (nucleophile) is an active-site residue.

Belongs to the glycosyl hydrolase 5 (cellulase A) family.

It localises to the secreted. It catalyses the reaction Random hydrolysis of (1-&gt;6)-linkages in (1-&gt;6)-beta-D-glucans.. Functionally, beta-glucanases participate in the metabolism of beta-glucan, the main structural component of the cell wall. Acts on lutean, pustulan and 1,6-oligo-beta-D-glucosides. This Aspergillus fumigatus (strain CBS 144.89 / FGSC A1163 / CEA10) (Neosartorya fumigata) protein is Probable glucan endo-1,6-beta-glucosidase B (exgB).